Consider the following 601-residue polypeptide: NADH-quinone oxidoreductase subunit C/D (601 aa).

The NADH dehydrogenase I subunit C stretch occupies residues 1–191 (MKLTRDFPSN…DPFMLDAAKQ (191 aa)). An NADH dehydrogenase I subunit D region spans residues 215-601 (DYMFLNLGPN…IDFVMSDVDR (387 aa)).

The protein in the N-terminal section; belongs to the complex I 30 kDa subunit family. It in the C-terminal section; belongs to the complex I 49 kDa subunit family. In terms of assembly, NDH-1 is composed of 13 different subunits. Subunits NuoB, CD, E, F, and G constitute the peripheral sector of the complex.

It is found in the cell inner membrane. It carries out the reaction a quinone + NADH + 5 H(+)(in) = a quinol + NAD(+) + 4 H(+)(out). In terms of biological role, NDH-1 shuttles electrons from NADH, via FMN and iron-sulfur (Fe-S) centers, to quinones in the respiratory chain. The immediate electron acceptor for the enzyme in this species is believed to be ubiquinone. Couples the redox reaction to proton translocation (for every two electrons transferred, four hydrogen ions are translocated across the cytoplasmic membrane), and thus conserves the redox energy in a proton gradient. The sequence is that of NADH-quinone oxidoreductase subunit C/D from Aeromonas salmonicida (strain A449).